The sequence spans 272 residues: Phosphonates import ATP-binding protein PhnC (272 aa).

An ABC transporter domain is found at 2–246 (LELQRLTKTY…VLATIYGAED (245 aa)). ATP is bound at residue 35 to 42 (GPSGAGKS). The tract at residues 248–272 (ASSGREPAPEREPEDTERHLAEVGR) is disordered. Basic and acidic residues predominate over residues 254–272 (PAPEREPEDTERHLAEVGR).

It belongs to the ABC transporter superfamily. Phosphonates importer (TC 3.A.1.9.1) family. In terms of assembly, the complex is composed of two ATP-binding proteins (PhnC), two transmembrane proteins (PhnE) and a solute-binding protein (PhnD).

It localises to the cell inner membrane. The enzyme catalyses phosphonate(out) + ATP + H2O = phosphonate(in) + ADP + phosphate + H(+). In terms of biological role, part of the ABC transporter complex PhnCDE involved in phosphonates import. Responsible for energy coupling to the transport system. The polypeptide is Phosphonates import ATP-binding protein PhnC (Chromohalobacter salexigens (strain ATCC BAA-138 / DSM 3043 / CIP 106854 / NCIMB 13768 / 1H11)).